Reading from the N-terminus, the 91-residue chain is uncharacterized protein (91 aa).

Positions 71-91 (NRENNSRSSVKQIINQETEEE) are disordered. The span at 76–91 (SRSSVKQIINQETEEE) shows a compositional bias: polar residues.

This is an uncharacterized protein from Bacillus subtilis (strain 168).